We begin with the raw amino-acid sequence, 500 residues long: Probable cytosol aminopeptidase (500 aa).

Mn(2+) contacts are provided by Lys268 and Asp273. The active site involves Lys280. Residues Asp291, Asp350, and Glu352 each coordinate Mn(2+). Arg354 is an active-site residue.

The protein belongs to the peptidase M17 family. The cofactor is Mn(2+).

The protein resides in the cytoplasm. It catalyses the reaction Release of an N-terminal amino acid, Xaa-|-Yaa-, in which Xaa is preferably Leu, but may be other amino acids including Pro although not Arg or Lys, and Yaa may be Pro. Amino acid amides and methyl esters are also readily hydrolyzed, but rates on arylamides are exceedingly low.. The enzyme catalyses Release of an N-terminal amino acid, preferentially leucine, but not glutamic or aspartic acids.. Its function is as follows. Presumably involved in the processing and regular turnover of intracellular proteins. Catalyzes the removal of unsubstituted N-terminal amino acids from various peptides. The polypeptide is Probable cytosol aminopeptidase (Alkaliphilus metalliredigens (strain QYMF)).